The sequence spans 122 residues: Large ribosomal subunit protein uL14 (122 aa).

It belongs to the universal ribosomal protein uL14 family. In terms of assembly, part of the 50S ribosomal subunit. Forms a cluster with proteins L3 and L19. In the 70S ribosome, L14 and L19 interact and together make contacts with the 16S rRNA in bridges B5 and B8.

Binds to 23S rRNA. Forms part of two intersubunit bridges in the 70S ribosome. The sequence is that of Large ribosomal subunit protein uL14 from Pseudothermotoga lettingae (strain ATCC BAA-301 / DSM 14385 / NBRC 107922 / TMO) (Thermotoga lettingae).